Consider the following 704-residue polypeptide: Plasma membrane ATPase 2 (704 aa).

A helical transmembrane segment spans residues 1-16 (CSIAVGMIIEIIVMYP). Topologically, residues 17 to 26 (IQHRKYRPGI) are extracellular. Residues 27–48 (DNLLVLLIGGIPIAMPTVLSVT) traverse the membrane as a helical segment. The Cytoplasmic portion of the chain corresponds to 49-395 (MAIGSHRLAQ…TSRAIFQRMK (347 aa)). Asp81 serves as the catalytic 4-aspartylphosphate intermediate. Asp340 and Asp344 together coordinate Mg(2+). A helical transmembrane segment spans residues 396–417 (NYTIYAVSITIRIVLGFMLLAL). The Extracellular segment spans residues 418-422 (IWKFD). Residues 423 to 445 (FPPFMVLIIAILNDGTIMTISKD) form a helical membrane-spanning segment. Residues 446–461 (RVKPSPLPDSWKLAEI) lie on the Cytoplasmic side of the membrane. Residues 462 to 482 (FTTGVVLGGYLAMMTVIFFWA) traverse the membrane as a helical segment. The Extracellular portion of the chain corresponds to 483 to 507 (AYETQFFPRVFGVSTLQRTATDDFR). A helical membrane pass occupies residues 508–528 (KLASAIYLQVSTISQALIFVT). Residues 529–540 (RSRSWSFVERPG) are Cytoplasmic-facing. Residues 541–561 (LLLVVALIVAQLVATLIAVYA) form a helical membrane-spanning segment. Topologically, residues 562 to 570 (SWSFAAIEG) are extracellular. Residues 571–591 (IGWGWAGVIWLYNLVFYFPLD) traverse the membrane as a helical segment. Residues 592–704 (IIKFLIRYAL…IETIQQSYTV (113 aa)) are Cytoplasmic-facing.

The protein belongs to the cation transport ATPase (P-type) (TC 3.A.3) family. Type IIIA subfamily. Possibly exists as a homodimer or a homotrimer.

It is found in the cell membrane. It carries out the reaction ATP + H2O + H(+)(in) = ADP + phosphate + 2 H(+)(out). The plasma membrane ATPase of plants and fungi is a hydrogen ion pump. The proton gradient it generates drives the active transport of nutrients by H(+)-symport. The resulting external acidification and/or internal alkinization may mediate growth responses. This Solanum lycopersicum (Tomato) protein is Plasma membrane ATPase 2 (LHA2).